The primary structure comprises 235 residues: Phosphoribosylformylglycinamidine synthase subunit PurQ (235 aa).

Positions phenylalanine 5–alanine 235 constitute a Glutamine amidotransferase type-1 domain. Cysteine 88 serves as the catalytic Nucleophile. Catalysis depends on residues histidine 205 and glutamate 207.

Part of the FGAM synthase complex composed of 1 PurL, 1 PurQ and 2 PurS subunits.

The protein resides in the cytoplasm. The catalysed reaction is N(2)-formyl-N(1)-(5-phospho-beta-D-ribosyl)glycinamide + L-glutamine + ATP + H2O = 2-formamido-N(1)-(5-O-phospho-beta-D-ribosyl)acetamidine + L-glutamate + ADP + phosphate + H(+). The enzyme catalyses L-glutamine + H2O = L-glutamate + NH4(+). Its pathway is purine metabolism; IMP biosynthesis via de novo pathway; 5-amino-1-(5-phospho-D-ribosyl)imidazole from N(2)-formyl-N(1)-(5-phospho-D-ribosyl)glycinamide: step 1/2. Its function is as follows. Part of the phosphoribosylformylglycinamidine synthase complex involved in the purines biosynthetic pathway. Catalyzes the ATP-dependent conversion of formylglycinamide ribonucleotide (FGAR) and glutamine to yield formylglycinamidine ribonucleotide (FGAM) and glutamate. The FGAM synthase complex is composed of three subunits. PurQ produces an ammonia molecule by converting glutamine to glutamate. PurL transfers the ammonia molecule to FGAR to form FGAM in an ATP-dependent manner. PurS interacts with PurQ and PurL and is thought to assist in the transfer of the ammonia molecule from PurQ to PurL. This is Phosphoribosylformylglycinamidine synthase subunit PurQ from Salinibacter ruber (strain DSM 13855 / M31).